The following is a 570-amino-acid chain: Glycine--tRNA ligase (570 aa).

Residues Arg-99 and Glu-165 each coordinate substrate. ATP contacts are provided by residues 197–199 (RNE), 207–212 (IRLREF), 324–325 (EC), and 443–446 (GIDR). 212–216 (FTQAE) is a binding site for substrate. 439–443 (EPSFG) is a substrate binding site.

Belongs to the class-II aminoacyl-tRNA synthetase family.

The protein localises to the cytoplasm. The enzyme catalyses tRNA(Gly) + glycine + ATP = glycyl-tRNA(Gly) + AMP + diphosphate. In terms of biological role, catalyzes the attachment of glycine to tRNA(Gly). This is Glycine--tRNA ligase from Pyrococcus horikoshii (strain ATCC 700860 / DSM 12428 / JCM 9974 / NBRC 100139 / OT-3).